The following is a 682-amino-acid chain: Polyadenylate-binding protein 5 (682 aa).

RRM domains are found at residues 59–136 (SSLY…LSNR), 146–223 (GNVF…HFVR), 239–316 (TNVY…RAQK), and 342–419 (SNLY…LAQR). The 78-residue stretch at 588–665 (TISKLASDLA…ALDVLRRSAD (78 aa)) folds into the PABC domain. Position 600 is a phosphoserine (serine 600).

The protein belongs to the polyadenylate-binding protein type-1 family. As to expression, expressed predominantly in immature flowers but also at lower levels in mature flowers and siliques. Detected in tapetum, pollen, ovules and developing seeds. Also detected in primary inflorescences and immature siliques.

The protein localises to the cytoplasm. It is found in the nucleus. Functionally, binds the poly(A) tail of mRNA. Appears to be an important mediator of the multiple roles of the poly(A) tail in mRNA biogenesis, stability and translation. This chain is Polyadenylate-binding protein 5 (PAB5), found in Arabidopsis thaliana (Mouse-ear cress).